A 510-amino-acid polypeptide reads, in one-letter code: Calmodulin-binding receptor-like cytoplasmic kinase 3 (510 aa).

The N-terminal stretch at 1–30 is a signal peptide; it reads MGGDDLSFTRLVITALFGLLMLLQIKETSA. Polar residues predominate over residues 166 to 178; sequence VSSFEMSPSSEKI. Residues 166–209 are disordered; that stretch reads VSSFEMSPSSEKIPQSPFRAPPSPSRVPQSPSRYAMSPRPSRLG. Phosphothreonine is present on Thr-214. The 275-residue stretch at 225 to 499 folds into the Protein kinase domain; the sequence is FADSHQIGEG…MEAVGKQLWA (275 aa). Residues 231 to 239 and Lys-253 contribute to the ATP site; that span reads IGEGGFGVV. Residues 240–265 are caM-binding; the sequence is FKGVLDDGQVVAIKRAKKEHFENLRT. Asp-350 acts as the Proton acceptor in catalysis. Residue Ser-354 is modified to Phosphoserine. A phosphothreonine mark is found at Thr-386 and Thr-391. Position 399 is a phosphotyrosine (Tyr-399).

Belongs to the protein kinase superfamily. Ser/Thr protein kinase family. In terms of assembly, interacts with calmodulin (CaM) in a Ca(2+)-dependent manner.

The protein resides in the cytoplasm. The enzyme catalyses L-seryl-[protein] + ATP = O-phospho-L-seryl-[protein] + ADP + H(+). It carries out the reaction L-threonyl-[protein] + ATP = O-phospho-L-threonyl-[protein] + ADP + H(+). The chain is Calmodulin-binding receptor-like cytoplasmic kinase 3 (CRCK3) from Arabidopsis thaliana (Mouse-ear cress).